The following is a 1957-amino-acid chain: Chromatin modification-related protein EAF1 A (1957 aa).

4 disordered regions span residues 108–208, 261–287, 323–373, and 449–469; these read ASPH…TDLV, NRVS…GSKT, GGSP…SHAN, and NQSH…ETEK. Residues 140–151 show a composition bias toward basic and acidic residues; sequence SENKSVEGERNL. Composition is skewed to polar residues over residues 261–270, 333–342, and 355–372; these read NRVSSNSLNT, GQKNSSTQLN, and TNRG…SSHA. Residues 563-641 form the HSA domain; sequence CGTAPVEVRE…LSNAILQFWS (79 aa). 2 disordered regions span residues 833–909 and 928–950; these read GSNS…AVQK and AETS…DQTW. Polar residues predominate over residues 884 to 898; sequence TDASSGDTSSFQDEY. The 57-residue stretch at 1049–1105 folds into the SANT domain; the sequence is SGNPWSLFEDQALVVLVHDMGPNWELISDAMNSTLKIKCIYRNPTECKDRHKILMDK. Disordered regions lie at residues 1107-1131, 1282-1314, 1344-1367, 1449-1644, 1687-1768, 1804-1840, and 1876-1957; these read AGDG…PGIP, TPVL…GLQS, LSGR…DRGH, QGNS…QQLN, PVRP…IAPA, ELSK…PQAS, and SSNT…TKVE. Polar residues-rich tracts occupy residues 1116 to 1125, 1290 to 1314, 1344 to 1358, 1459 to 1472, 1479 to 1492, and 1501 to 1510; these read DSGNSQSYPS, AHPS…GLQS, LSGR…STPA, SNLS…TTPV, LSQQ…SHVL, and QSPSQATGAQ. Composition is skewed to low complexity over residues 1523–1534 and 1545–1562; these read QRYLQQQQQQQQ and VQQP…NSPQ. Residues 1563-1579 are compositionally biased toward pro residues; that stretch reads TQPPVSPQPLSMPPVSP. Composition is skewed to polar residues over residues 1582-1595, 1604-1618, 1635-1644, 1691-1722, and 1734-1758; these read NINA…QKSQ, SPQS…QAGK, RQPTQGQQLN, DQQS…QQLP, and QQQM…CNIL. A compositionally biased stretch (low complexity) spans 1759-1768; that stretch reads STSSPSIAPA. Residues 1805–1815 are compositionally biased toward basic and acidic residues; the sequence is LSKKSQAERMP. Composition is skewed to polar residues over residues 1819-1832 and 1876-1894; these read QSVT…SMGT and SSNT…NQGL. 2 stretches are compositionally biased toward basic and acidic residues: residues 1913–1922 and 1932–1942; these read SEEKRPKLPE and LASEEQPHLEE.

This sequence belongs to the EAF1 family. As to quaternary structure, component of the NuA4 histone acetyltransferase complex. Interacts with ARP4 and SWC4, and (via HSA domain) with TAF14 and TAF14B. In terms of tissue distribution, expressed in leaves.

Its subcellular location is the nucleus. In terms of biological role, component of the NuA4 histone acetyltransferase complex which is involved in transcriptional activation of selected genes principally by acetylation of nucleosomal histone H4 and H2A. This chain is Chromatin modification-related protein EAF1 A (EAF1A), found in Arabidopsis thaliana (Mouse-ear cress).